The following is a 399-amino-acid chain: Elongation factor Tu (399 aa).

One can recognise a tr-type G domain in the interval 10–204; that stretch reads KPHVNIGTIG…AVDEAIPEPE (195 aa). Residues 19–26 are G1; that stretch reads GHVDHGKT. 19–26 provides a ligand contact to GTP; sequence GHVDHGKT. Threonine 26 provides a ligand contact to Mg(2+). Positions 60 to 64 are G2; the sequence is GITIN. The interval 81–84 is G3; sequence DCPG. Residues 81–85 and 136–139 each bind GTP; these read DCPGH and NKCD. Residues 136-139 form a G4 region; sequence NKCD. The G5 stretch occupies residues 174–176; the sequence is SGL.

It belongs to the TRAFAC class translation factor GTPase superfamily. Classic translation factor GTPase family. EF-Tu/EF-1A subfamily. Monomer.

Its subcellular location is the cytoplasm. It carries out the reaction GTP + H2O = GDP + phosphate + H(+). In terms of biological role, GTP hydrolase that promotes the GTP-dependent binding of aminoacyl-tRNA to the A-site of ribosomes during protein biosynthesis. In Parasynechococcus marenigrum (strain WH8102), this protein is Elongation factor Tu.